We begin with the raw amino-acid sequence, 151 residues long: SsrA-binding protein (151 aa).

Belongs to the SmpB family.

Its subcellular location is the cytoplasm. Functionally, required for rescue of stalled ribosomes mediated by trans-translation. Binds to transfer-messenger RNA (tmRNA), required for stable association of tmRNA with ribosomes. tmRNA and SmpB together mimic tRNA shape, replacing the anticodon stem-loop with SmpB. tmRNA is encoded by the ssrA gene; the 2 termini fold to resemble tRNA(Ala) and it encodes a 'tag peptide', a short internal open reading frame. During trans-translation Ala-aminoacylated tmRNA acts like a tRNA, entering the A-site of stalled ribosomes, displacing the stalled mRNA. The ribosome then switches to translate the ORF on the tmRNA; the nascent peptide is terminated with the 'tag peptide' encoded by the tmRNA and targeted for degradation. The ribosome is freed to recommence translation, which seems to be the essential function of trans-translation. The polypeptide is SsrA-binding protein (Nitrosomonas europaea (strain ATCC 19718 / CIP 103999 / KCTC 2705 / NBRC 14298)).